The sequence spans 644 residues: Sodium/hydrogen exchanger 9 (644 aa).

Residues 1-20 are Lumenal-facing; sequence MAGQLRFTSGKDEDHFQHQG. A helical transmembrane segment spans residues 21–41; the sequence is AVELLAFNFLLILTILTIWLF. Over 42 to 45 the chain is Cytoplasmic; the sequence is KNHR. A helical membrane pass occupies residues 46 to 66; it reads FRFLHETGGAMVYGLIMGLIL. At 67-126 the chain is on the lumenal side; that stretch reads RYATAPTDIDSGTVYNCGNLFFSPSTLLVNITDQVYEYKYQREINQHNISPHQGNAILEK. A helical membrane pass occupies residues 127-147; it reads MTFDPEIFFNVLLPPIIFHAG. At 148–164 the chain is on the cytoplasmic side; sequence YSLKKRHFFQNLGSILT. The helical transmembrane segment at 165–185 threads the bilayer; that stretch reads YAFLGTAISCVVIGLIMYGFV. Residues 186–203 lie on the Lumenal side of the membrane; the sequence is KAMVHAGQLKSGDFHFTD. Residues 204 to 224 traverse the membrane as a helical segment; sequence CLFFGSLMSATDPVTVLAIFH. At 225-235 the chain is on the cytoplasmic side; it reads ELHVDPDLYTL. Residues 236–256 traverse the membrane as a helical segment; the sequence is LFGESVLNDAVAIVLTYSISI. Over 257–277 the chain is Lumenal; it reads YSPKENPNAFDTAAFFQSVGN. Residues 278–298 traverse the membrane as a helical segment; it reads FLGIFAGSFAMGSAYAVVTAL. The Cytoplasmic portion of the chain corresponds to 299-309; it reads LTKFTKLREFP. Residues 310–327 form a helical membrane-spanning segment; it reads MLETGLFFLLSWSAFLSA. Residues 328-333 are Lumenal-facing; sequence EAAGLT. Residues 334 to 350 form a helical membrane-spanning segment; the sequence is GIVAVLFCGVTQAHYTY. Residues 351–364 lie on the Cytoplasmic side of the membrane; sequence NNLSSDSKLRTKQL. Residues 365 to 385 traverse the membrane as a helical segment; the sequence is FEFMNFLAENVIFCYMGLALF. Thr-386 is a topological domain (lumenal). The helical transmembrane segment at 387–407 threads the bilayer; it reads FQNHIFNALFILGAFLAIFVA. Over 408-429 the chain is Cytoplasmic; the sequence is RACNIYPLSFLLNLGRKQKIPW. A helical membrane pass occupies residues 430–450; that stretch reads NFQHMMMFSGLRGAIAFALAI. The Lumenal portion of the chain corresponds to 451-465; it reads RNTESQPKQMMFTTT. A helical transmembrane segment spans residues 466-486; it reads LLLVFFTVWVFGGGTTPMLTW. Topologically, residues 487 to 644 are cytoplasmic; it reads LQIRVGVDLD…EQTRGQPQMD (158 aa). The interval 590-644 is disordered; it reads YQEQSPSPSSPTTKLALDQKSSGQTPGKENIYEGDLGLGGYDLKLEQTRGQPQMD.

It belongs to the monovalent cation:proton antiporter 1 (CPA1) transporter (TC 2.A.36) family. As to quaternary structure, homodimer; phosphatidylinositol-4,5-bisphosphate (PIP2) and phosphatidylinositol 3,4,5-trisphosphate (PIP3) could be involved in the dimer stabilization. Interacts (via the C-terminus) with RACK1. Interacts with CHP1. In terms of tissue distribution, expressed in the brain. Highly expressed in immune cells, specifically macrophages.

The protein localises to the late endosome membrane. The protein resides in the cell membrane. It localises to the early endosome membrane. It is found in the recycling endosome membrane. Its subcellular location is the cytoplasmic vesicle. The protein localises to the phagosome membrane. It carries out the reaction Na(+)(in) + H(+)(out) = Na(+)(out) + H(+)(in). It catalyses the reaction K(+)(in) + H(+)(out) = K(+)(out) + H(+)(in). Functionally, endosomal Na(+), K(+)/H(+) antiporter. Mediates the electroneutral exchange of endosomal luminal H(+) for a cytosolic Na(+) or K(+). By facilitating proton efflux, SLC9A9 counteracts the acidity generated by vacuolar (V)-ATPase, thereby limiting luminal acidification. Regulates organellar pH and consequently, endosome maturation and endocytic trafficking of plasma membrane receptors and neurotransporters. Promotes the recycling of transferrin receptors back to the cell surface to facilitate additional iron uptake in the brain. Regulates synaptic transmission by regulating the luminal pH of axonal endosomes. Regulates phagosome lumenal pH, thus affecting phagosome maturation, and consequently, microbicidal activity in macrophages. Can also be active at the cell surface of specialized cells, e.g., in the inner ear hair bundles uses the high K(+) of the endolymph to regulate intracelular pH. The polypeptide is Sodium/hydrogen exchanger 9 (Slc9a9) (Mus musculus (Mouse)).